A 283-amino-acid polypeptide reads, in one-letter code: Cyclin-C (283 aa).

The Cyclin N-terminal domain occupies 46 to 144 (NVIQALGEHL…ILECEFYLLE (99 aa)). Residues 252–283 (TILNKMPKPKPPPNSEGEQGTNGSQSSGYSQS) form a disordered region. The span at 267 to 283 (EGEQGTNGSQSSGYSQS) shows a compositional bias: polar residues.

This sequence belongs to the cyclin family. Cyclin C subfamily. As to quaternary structure, component of the Mediator complex. The cylin/CDK pair formed by ccnc/cdk8 also associates with the large subunit of RNA polymerase II.

It is found in the nucleus. In terms of biological role, component of the Mediator complex, a coactivator involved in regulated gene transcription of nearly all RNA polymerase II-dependent genes. Mediator functions as a bridge to convey information from gene-specific regulatory proteins to the basal RNA polymerase II transcription machinery. Mediator is recruited to promoters by direct interactions with regulatory proteins and serves as a scaffold for the assembly of a functional preinitiation complex with RNA polymerase II and the general transcription factors. Binds to and activates cyclin-dependent kinase cdk8 that phosphorylates the CTD (C-terminal domain) of the large subunit of RNA polymerase II (RNAp II), which may inhibit the formation of a transcription initiation complex. The polypeptide is Cyclin-C (ccnc) (Xenopus tropicalis (Western clawed frog)).